A 208-amino-acid polypeptide reads, in one-letter code: Thiamine-phosphate synthase (208 aa).

4-amino-2-methyl-5-(diphosphooxymethyl)pyrimidine-binding positions include 37–39 (QVR) and asparagine 70. Residues aspartate 71 and aspartate 90 each coordinate Mg(2+). Position 109 (threonine 109) interacts with 4-amino-2-methyl-5-(diphosphooxymethyl)pyrimidine. 135–137 (TTS) is a binding site for 2-[(2R,5Z)-2-carboxy-4-methylthiazol-5(2H)-ylidene]ethyl phosphate. Lysine 138 serves as a coordination point for 4-amino-2-methyl-5-(diphosphooxymethyl)pyrimidine. 2-[(2R,5Z)-2-carboxy-4-methylthiazol-5(2H)-ylidene]ethyl phosphate is bound at residue alanine 166.

The protein belongs to the thiamine-phosphate synthase family. Requires Mg(2+) as cofactor.

The enzyme catalyses 2-[(2R,5Z)-2-carboxy-4-methylthiazol-5(2H)-ylidene]ethyl phosphate + 4-amino-2-methyl-5-(diphosphooxymethyl)pyrimidine + 2 H(+) = thiamine phosphate + CO2 + diphosphate. It carries out the reaction 2-(2-carboxy-4-methylthiazol-5-yl)ethyl phosphate + 4-amino-2-methyl-5-(diphosphooxymethyl)pyrimidine + 2 H(+) = thiamine phosphate + CO2 + diphosphate. The catalysed reaction is 4-methyl-5-(2-phosphooxyethyl)-thiazole + 4-amino-2-methyl-5-(diphosphooxymethyl)pyrimidine + H(+) = thiamine phosphate + diphosphate. Its pathway is cofactor biosynthesis; thiamine diphosphate biosynthesis; thiamine phosphate from 4-amino-2-methyl-5-diphosphomethylpyrimidine and 4-methyl-5-(2-phosphoethyl)-thiazole: step 1/1. Its function is as follows. Condenses 4-methyl-5-(beta-hydroxyethyl)thiazole monophosphate (THZ-P) and 2-methyl-4-amino-5-hydroxymethyl pyrimidine pyrophosphate (HMP-PP) to form thiamine monophosphate (TMP). This Salinispora tropica (strain ATCC BAA-916 / DSM 44818 / JCM 13857 / NBRC 105044 / CNB-440) protein is Thiamine-phosphate synthase.